Reading from the N-terminus, the 865-residue chain is DNA-directed RNA polymerase subunit Rpo1N (865 aa).

8 residues coordinate Zn(2+): C60, C63, C70, H73, C100, C103, C146, and C149. Residues D451, D453, and D455 each coordinate Mg(2+). Residues 500–531 (EHTSSQGKRLFSVRSRPPDPQEGRAPPPDREG) form a disordered region. The segment covering 515–531 (RPPDPQEGRAPPPDREG) has biased composition (basic and acidic residues).

Belongs to the RNA polymerase beta' chain family. In terms of assembly, part of the RNA polymerase complex. Mg(2+) is required as a cofactor. The cofactor is Zn(2+).

The protein localises to the cytoplasm. It catalyses the reaction RNA(n) + a ribonucleoside 5'-triphosphate = RNA(n+1) + diphosphate. Functionally, DNA-dependent RNA polymerase (RNAP) catalyzes the transcription of DNA into RNA using the four ribonucleoside triphosphates as substrates. Forms the clamp head domain. This chain is DNA-directed RNA polymerase subunit Rpo1N, found in Methanothermobacter thermautotrophicus (strain Winter) (Methanobacterium thermoautotrophicum).